Here is an 852-residue protein sequence, read N- to C-terminus: Polyphosphate kinase (852 aa).

Disordered regions lie at residues 1-36 (MATG…DRPI) and 58-82 (SHDP…SRRK). The segment covering 20 to 36 (VARDHPGCGPHRLDRPI) has biased composition (basic and acidic residues). The segment covering 58–67 (SHDPAPSQSV) has biased composition (polar residues). Residue Asn-131 coordinates ATP. Residues 251-303 (GDEIGPQRTPPPSDSLDNRVPSNLKRNSDTANQQPTPAENISAPEDGAEQTEP) are disordered. The tract at residues 258 to 303 (RTPPPSDSLDNRVPSNLKRNSDTANQQPTPAENISAPEDGAEQTEP) is insert. The segment covering 270–289 (VPSNLKRNSDTANQQPTPAE) has biased composition (polar residues). Positions 524 and 554 each coordinate Mg(2+). His-584 serves as the catalytic Phosphohistidine intermediate. ATP contacts are provided by Tyr-617, Arg-713, and His-741.

This sequence belongs to the polyphosphate kinase 1 (PPK1) family. Mg(2+) is required as a cofactor. In terms of processing, an intermediate of this reaction is the autophosphorylated ppk in which a phosphate is covalently linked to a histidine residue through a N-P bond.

The enzyme catalyses [phosphate](n) + ATP = [phosphate](n+1) + ADP. Functionally, catalyzes the reversible transfer of the terminal phosphate of ATP to form a long-chain polyphosphate (polyP). The chain is Polyphosphate kinase from Rhodopirellula baltica (strain DSM 10527 / NCIMB 13988 / SH1).